A 757-amino-acid polypeptide reads, in one-letter code: Probable inorganic carbon transporter subunit DabA (757 aa).

Residues Cys-321, Asp-323, His-475, and Cys-490 each coordinate Zn(2+).

Belongs to the inorganic carbon transporter (TC 9.A.2) DabA family. In terms of assembly, forms a complex with DabB. Requires Zn(2+) as cofactor.

The protein resides in the cell inner membrane. Its function is as follows. Part of an energy-coupled inorganic carbon pump. In Idiomarina loihiensis (strain ATCC BAA-735 / DSM 15497 / L2-TR), this protein is Probable inorganic carbon transporter subunit DabA.